Reading from the N-terminus, the 83-residue chain is Small ribosomal subunit protein bS18 (83 aa).

This sequence belongs to the bacterial ribosomal protein bS18 family. As to quaternary structure, part of the 30S ribosomal subunit. Forms a tight heterodimer with protein bS6.

Binds as a heterodimer with protein bS6 to the central domain of the 16S rRNA, where it helps stabilize the platform of the 30S subunit. This Cytophaga hutchinsonii (strain ATCC 33406 / DSM 1761 / CIP 103989 / NBRC 15051 / NCIMB 9469 / D465) protein is Small ribosomal subunit protein bS18.